The chain runs to 176 residues: uncharacterized protein (176 aa).

Residues 71–176 (RDDMSSDSDG…YSTDDDEDDY (106 aa)) form a disordered region. Composition is skewed to low complexity over residues 77–87 (DSDGPAASPPG) and 100–109 (SYSSSDSSAR). Residues 140–152 (KARRPARKKKRIG) are compositionally biased toward basic residues.

This is an uncharacterized protein from Orgyia pseudotsugata multicapsid polyhedrosis virus (OpMNPV).